The sequence spans 221 residues: Pectate lyase C (221 aa).

Residues 1-27 form the signal peptide; that stretch reads MKKIVSILFMFGLVMGFSQFQPSTVFA.

The protein belongs to the polysaccharide lyase 3 family. Requires Ca(2+) as cofactor.

Its subcellular location is the secreted. It carries out the reaction Eliminative cleavage of (1-&gt;4)-alpha-D-galacturonan to give oligosaccharides with 4-deoxy-alpha-D-galact-4-enuronosyl groups at their non-reducing ends.. The enzyme catalyses Eliminative cleavage of (1-&gt;4)-alpha-D-galacturonan methyl ester to give oligosaccharides with 4-deoxy-6-O-methyl-alpha-D-galact-4-enuronosyl groups at their non-reducing ends.. It participates in glycan metabolism; pectin degradation; 2-dehydro-3-deoxy-D-gluconate from pectin: step 2/5. Catalyzes the depolymerization of both polygalacturonate and pectins of methyl esterification degree from 22 to 89%, with an endo mode of action. In contrast to the majority of pectate lyases, displays high activity on highly methylated pectins. Is also able to cleave trigalacturonate to galacturonic acid and unsaturated digalacturonate. This Bacillus subtilis (strain 168) protein is Pectate lyase C (pelC).